A 343-amino-acid polypeptide reads, in one-letter code: Probable siderophore transport system permease protein YfhA (343 aa).

Helical transmembrane passes span 15–35 (WIVF…SAGL), 69–89 (ILTA…LQGL), 97–117 (PDII…MMFF), 130–150 (WLPA…YLLA), 160–180 (LVLI…LLMI), 204–224 (QHVK…FVAL), 249–269 (FFLL…AGTI), 289–309 (GALL…ADIV), and 317–337 (VEVP…IYLL).

This sequence belongs to the binding-protein-dependent transport system permease family. FecCD subfamily. In terms of assembly, the complex is composed of one ATP-binding protein (YusV), two transmembrane proteins (YfiZ and YfhA) and a solute-binding protein (YfiY).

The protein localises to the cell membrane. Its function is as follows. Part of the ABC transporter complex YfiYZ/YfhA/YusV involved in import of the iron-hydroxamate siderophores schizokinen, arthrobactin and corprogen. The protein is Probable siderophore transport system permease protein YfhA (yfhA) of Bacillus subtilis (strain 168).